The following is a 110-amino-acid chain: Neural hemoglobin (110 aa).

The Globin domain maps to 2–110; sequence VNWAAVVDDF…HAIDDILSHL (109 aa). H70 is a heme binding site.

This sequence belongs to the globin family. Homotetramer. Self-associates in the deoxy state. Seems to dissociate upon oxygenation.

Its function is as follows. Acts as an oxygen store capable of sustaining neuronal activity in an anoxic environment for 5 to 30 minutes. The protein is Neural hemoglobin of Cerebratulus lacteus (Milky ribbon worm).